The chain runs to 177 residues: Large ribosomal subunit protein uL6 (177 aa).

Belongs to the universal ribosomal protein uL6 family. As to quaternary structure, part of the 50S ribosomal subunit.

This protein binds to the 23S rRNA, and is important in its secondary structure. It is located near the subunit interface in the base of the L7/L12 stalk, and near the tRNA binding site of the peptidyltransferase center. The chain is Large ribosomal subunit protein uL6 from Actinobacillus succinogenes (strain ATCC 55618 / DSM 22257 / CCUG 43843 / 130Z).